The chain runs to 398 residues: Small ribosomal subunit protein uS3m (398 aa).

It belongs to the universal ribosomal protein uS3 family. In terms of assembly, component of the mitochondrial small ribosomal subunit (mt-SSU). Mature yeast 74S mitochondrial ribosomes consist of a small (37S) and a large (54S) subunit. The 37S small subunit contains a 15S ribosomal RNA (15S mt-rRNA) and 34 different proteins. The 54S large subunit contains a 21S rRNA (21S mt-rRNA) and 46 different proteins. uS3m, uS4m and uS5m form the narrow entry site of the mRNA channel.

The protein localises to the mitochondrion. In terms of biological role, component of the mitochondrial ribosome (mitoribosome), a dedicated translation machinery responsible for the synthesis of mitochondrial genome-encoded proteins, including at least some of the essential transmembrane subunits of the mitochondrial respiratory chain. The mitoribosomes are attached to the mitochondrial inner membrane and translation products are cotranslationally integrated into the membrane. uS3m is essential for mitochondrial protein synthesis and required for the maturation of small ribosomal subunits. The sequence is that of Small ribosomal subunit protein uS3m (VAR1) from Saccharomyces cerevisiae (strain ATCC 204508 / S288c) (Baker's yeast).